Consider the following 278-residue polypeptide: Potassium/proton antiporter CemA (278 aa).

Transmembrane regions (helical) follow at residues 61 to 81, 154 to 174, 203 to 223, and 238 to 258; these read VVFL…FLFG, CAIT…SILI, IILF…EVII, and FIFV…KYWI.

It belongs to the CemA family.

It localises to the plastid. It is found in the chloroplast inner membrane. It carries out the reaction K(+)(in) + H(+)(out) = K(+)(out) + H(+)(in). Its function is as follows. Contributes to K(+)/H(+) antiport activity by supporting proton efflux to control proton extrusion and homeostasis in chloroplasts in a light-dependent manner to modulate photosynthesis. Prevents excessive induction of non-photochemical quenching (NPQ) under continuous-light conditions. Indirectly promotes efficient inorganic carbon uptake into chloroplasts. The polypeptide is Potassium/proton antiporter CemA (Gracilaria tenuistipitata var. liui (Red alga)).